Here is a 103-residue protein sequence, read N- to C-terminus: MPEMVPTSYYLALSGVLFALGLIGVMTRRTAILIFLSVELMLNAANIALVAFARSWGDLMGQTAVFIVMTLAAAEVAIGLAIIVAIFRGRETTNVDDLAQLRG.

3 helical membrane-spanning segments follow: residues 5-25, 32-52, and 66-86; these read VPTSYYLALSGVLFALGLIGV, ILIFLSVELMLNAANIALVAF, and FIVMTLAAAEVAIGLAIIVAI.

It belongs to the complex I subunit 4L family. In terms of assembly, NDH-1 is composed of 15 different subunits. Subunits NuoA, H, J, K, L, M, N constitute the membrane sector of the complex.

The protein localises to the cell membrane. It carries out the reaction a quinone + NADH + 5 H(+)(in) = a quinol + NAD(+) + 4 H(+)(out). In terms of biological role, NDH-1 shuttles electrons from NADH, via FMN and iron-sulfur (Fe-S) centers, to quinones in the respiratory chain. The immediate electron acceptor for the enzyme in this species is believed to be a menaquinone. Couples the redox reaction to proton translocation (for every two electrons transferred, four hydrogen ions are translocated across the cytoplasmic membrane), and thus conserves the redox energy in a proton gradient. The polypeptide is NADH-quinone oxidoreductase subunit K (Deinococcus radiodurans (strain ATCC 13939 / DSM 20539 / JCM 16871 / CCUG 27074 / LMG 4051 / NBRC 15346 / NCIMB 9279 / VKM B-1422 / R1)).